The following is a 136-amino-acid chain: Large-conductance mechanosensitive channel (136 aa).

Transmembrane regions (helical) follow at residues 9–29 (AFASRGNVIDMAVGIIIGAAF) and 79–99 (IQTVIDFTIIAFAIFMGLKAI).

It belongs to the MscL family. In terms of assembly, homopentamer.

It localises to the cell inner membrane. In terms of biological role, channel that opens in response to stretch forces in the membrane lipid bilayer. May participate in the regulation of osmotic pressure changes within the cell. The chain is Large-conductance mechanosensitive channel from Shewanella sp. (strain W3-18-1).